Here is a 329-residue protein sequence, read N- to C-terminus: tRNA(Ile)-lysidine synthase (329 aa).

An ATP-binding site is contributed by 37–42 (SGGSDS).

Belongs to the tRNA(Ile)-lysidine synthase family.

It is found in the cytoplasm. The catalysed reaction is cytidine(34) in tRNA(Ile2) + L-lysine + ATP = lysidine(34) in tRNA(Ile2) + AMP + diphosphate + H(+). In terms of biological role, ligates lysine onto the cytidine present at position 34 of the AUA codon-specific tRNA(Ile) that contains the anticodon CAU, in an ATP-dependent manner. Cytidine is converted to lysidine, thus changing the amino acid specificity of the tRNA from methionine to isoleucine. The polypeptide is tRNA(Ile)-lysidine synthase (Zymomonas mobilis subsp. mobilis (strain ATCC 31821 / ZM4 / CP4)).